The primary structure comprises 188 residues: Antitoxin SocA (188 aa).

As to quaternary structure, interacts with cognate toxin SocB and with ClpX.

Functionally, antitoxin component of an atypical type II toxin-antitoxin (TA) system. Unlike most type II TA systems, neutralizes the toxic activity of cognate toxin SocB by acting as an adapter to promote its degradation by ClpXP; degradation is dependent on the N-terminus of ClpX. This is Antitoxin SocA from Caulobacter vibrioides (strain NA1000 / CB15N) (Caulobacter crescentus).